A 266-amino-acid chain; its full sequence is Syntaxin-71 (266 aa).

At 1–243 (MTVIDILTRV…TVNQLRSSRN (243 aa)) the chain is on the cytoplasmic side. A Phosphoserine modification is found at serine 12. Residues 44–87 (ETQIETALEKAELVTKEKNRAAAVAMNAEIRRTKARLSEEVPKL) are a coiled coil. Residues 122-146 (DGTAGGPKSTSAWTPSSTTSRPDIK) form a disordered region. A compositionally biased stretch (low complexity) spans 130–141 (STSAWTPSSTTS). Positions 172–234 (EMRKIKQEQG…KNTNVRLKDT (63 aa)) constitute a t-SNARE coiled-coil homology domain. Residues 244–264 (FCIDIVLLCIVLGIAAYLYNV) traverse the membrane as a helical; Anchor for type IV membrane protein segment. The Vesicular portion of the chain corresponds to 265 to 266 (LK).

This sequence belongs to the syntaxin family. As to quaternary structure, part of the t-SNARE complex. As to expression, expressed in root, leaf, stem, flower and silique.

The protein resides in the membrane. Vesicle trafficking protein that functions in the secretory pathway. In Arabidopsis thaliana (Mouse-ear cress), this protein is Syntaxin-71 (SYP71).